The following is a 1020-amino-acid chain: Nucleotide-binding oligomerization domain-containing protein 2 (1020 aa).

2 CARD domains span residues 6-104 (CDMC…GSWD) and 106-200 (HSLH…AECQ). An ATG16L1-binding motif motif is present at residues 43 to 57 (WDVLSREDYEGLSLP). The ADP site is built by threonine 219, tyrosine 232, threonine 233, glycine 282, serine 283, glycine 284, lysine 285, serine 286, and threonine 287. The interval 221-254 (DGSENLCLEDIYTENILELQTEVGTAGALQKSPA) is required for CARD9 binding. Residues 273–600 (DTILVVGEAG…AAFYLAVSAD (328 aa)) enclose the NACHT domain. Residue cysteine 375 is the site of S-palmitoyl cysteine attachment. ADP is bound at residue histidine 583. 10 LRR repeats span residues 685 to 709 (ARARSCLAHSLREHFHSIPPAVPGE), 726 to 749 (LYEMQEEQLAQEAVRRLDIGHLKL), 766 to 792 (LQHLQRPVALQLDYNSVGDVGVEQLRP), 794 to 817 (LGVCTALYLRDNNISDRGARTLVE), 822 to 845 (CEQLQKLALFNNKLTDACACSMAK), 850 to 873 (KQNFLSLRVGNNHITAAGAEVLAQ), 906 to 929 (HQNLKWLSLVGNNIGSMGAEALAL), 934 to 962 (NKSLEELCLEENHICDEGVYSLAEGLKRN), 963 to 985 (STLKFLKLSNNGITYRGAEALLQ), and 1005 to 1019 (LEEIQTLSSRDARLL).

This sequence belongs to the NOD1-NOD2 family. As to quaternary structure, homooligomer: homooligomerizes following muramyl dipeptide (MDP)-binding, promoting RIPK2 recruitment. Interacts (via CARD domain) with RIPK2 (via CARD domain). Following RIPK2 recruitment, RIPK2 homooligomerizes via its CARD domain and forms long filaments named RIPosomes. Interacts (via CARD domain) with ubiquitin; inhibiting interaction with RIPK2. Component of a signaling complex consisting of ARHGEF2, NOD2 and RIPK2. Interacts with ANKRD17 (via N-terminus). Interacts with HSPA1A; the interaction enhances NOD2 stability. Interacts (via both CARD domains) with HSP90; the interaction enhances NOD2 stability. Interacts (via CARD domain) with SOCS3; the interaction promotes NOD2 degradation. Interacts (via CARD domain) with ERBIN; the interaction inhibits activation of NOD2. Interacts with MAPKBP1; the interaction is enhanced in the presence of muramyl dipeptide (MDP) and inhibits NOD2 homooligomerization and activation. Interacts with INAVA; the interaction takes place upon Pattern recognition receptor (PRR) stimulation. Interacts (via NACHT domain) with CARD9. Interacts (via CARD domain) with CASP1; this interaction leads to IL1B processing. Also interacts with CASP4. Interacts with NLRP1; this interaction is enhanced in the presence of muramyl dipeptide (MDP) and leads to increased IL1B release. Interacts with NLRP12; this interaction promotes degradation of NOD2 through the ubiquitin-proteasome pathway. Interacts with ANKHD1, C10orf67, CHMP5, DOCK7, ENTR1, KRT15, LDOC1, PPP1R12C, PPP2R3B, TRIM41 and VIM. Interacts with MAVS; interaction takes place following single-stranded RNA (ssRNA)-binding. Interacts with ATG16L1. Interacts with Irgm1; promoting Irgm1 'Lys-63'-linked polyubiquitination, which is required for interactions with the core autophagy factors. Post-translationally, palmitoylated by ZDHHC5; palmitoylation is required for proper recruitment to the bacterial entry site and hence for proper signaling upon cognate peptidoglycan detection. Palmitoylation promotes localization to the cell membrane. Palmitoylation protects from SQSTM1/p62-dependent autophagic degradation. In terms of processing, polyubiquitinated by TRIM27, leading to proteasome-mediated degradation. Polyubiquitinated and degraded following muramyl dipeptide (MDP) stimulation, conferring MDP tolerance and preventing septic shock. Degraded via selective autophagy following interaction with Irgm1. Irgm1 promotes NOD2-RIPK2 RIPosome recruitment to autophagosome membranes, promoting their SQSTM1/p62-dependent autophagic degradation. Post-translationally, O-glycosylated by OGT, O-GlcNAcylation increases protein stability. As to expression, expressed in monocytes, macrophages, dendritic cells, hepatocytes, preadipocytes, epithelial cells of oral cavity, lung and intestine. In intestine, highly expressed in ileal Paneth cells of the crypt and in intestinal stem cells. Also expressed in neurons of several brain regions including the hypothalamus.

It is found in the cell membrane. Its subcellular location is the basolateral cell membrane. The protein resides in the cytoplasm. It localises to the mitochondrion. With respect to regulation, ADP-binding promotes an inactive closed conformation. Functionally, pattern recognition receptor (PRR) that detects bacterial peptidoglycan fragments and other danger signals and plays an important role in gastrointestinal immunity. Specifically activated by muramyl dipeptide (MDP), a fragment of bacterial peptidoglycan found in every bacterial peptidoglycan type. NOD2 specifically recognizes and binds 6-O-phospho-MDP, the phosphorylated form of MDP, which is generated by NAGK. 6-O-phospho-MDP-binding triggers oligomerization that facilitates the binding and subsequent activation of the proximal adapter receptor-interacting RIPK2. Following recruitment, RIPK2 undergoes 'Met-1'- (linear) and 'Lys-63'-linked polyubiquitination by E3 ubiquitin-protein ligases XIAP, BIRC2, BIRC3 and the LUBAC complex, becoming a scaffolding protein for downstream effectors, triggering activation of the NF-kappa-B and MAP kinases signaling. This in turn leads to the transcriptional activation of hundreds of genes involved in immune response. Its ability to detect bacterial MDP plays a central role in maintaining the equilibrium between intestinal microbiota and host immune responses to control inflammation. An imbalance in this relationship results in dysbiosis, whereby pathogenic bacteria prevail on commensals, causing damage in the intestinal epithelial barrier as well as allowing bacterial invasion and inflammation. Acts as a regulator of appetite by sensing MDP in a subset of brain neurons: microbiota-derived MDP reach the brain, where they bind and activate NOD2 in inhibitory hypothalamic neurons, decreasing neuronal activity, thereby regulating satiety and body temperature. NOD2-dependent MDP-sensing of bacterial cell walls in the intestinal epithelial compartment contributes to sustained postnatal growth upon undernutrition. Also plays a role in antiviral response by acting as a sensor of single-stranded RNA (ssRNA) from viruses: upon ssRNA-binding, interacts with MAVS, leading to activation of interferon regulatory factor-3/IRF3 and expression of type I interferon. Also acts as a regulator of autophagy in dendritic cells via its interaction with ATG16L1, possibly by recruiting ATG16L1 at the site of bacterial entry. NOD2 activation in the small intestine crypt also contributes to intestinal stem cells survival and function: acts by promoting mitophagy via its association with ATG16L1. In addition to its main role in innate immunity, also regulates the adaptive immune system by acting as regulator of helper T-cell and regulatory T-cells (Tregs). Besides recognizing pathogens, also involved in the endoplasmic reticulum stress response: acts by sensing and binding to the cytosolic metabolite sphingosine-1-phosphate generated in response to endoplasmic reticulum stress, initiating an inflammation process that leads to activation of the NF-kappa-B and MAP kinases signaling. May also be involved in NLRP1 activation following activation by MDP, leading to CASP1 activation and IL1B release in macrophages. The chain is Nucleotide-binding oligomerization domain-containing protein 2 from Mus musculus (Mouse).